We begin with the raw amino-acid sequence, 283 residues long: Putative 4-diphosphocytidyl-2-C-methyl-D-erythritol kinase (283 aa).

Lys-10 is an active-site residue. ATP is bound at residue 94–104 (PVCAGLGGGST). Asp-136 is an active-site residue.

This sequence belongs to the GHMP kinase family. IspE subfamily.

It carries out the reaction 4-CDP-2-C-methyl-D-erythritol + ATP = 4-CDP-2-C-methyl-D-erythritol 2-phosphate + ADP + H(+). In terms of biological role, catalyzes the phosphorylation of the position 2 hydroxy group of 4-diphosphocytidyl-2C-methyl-D-erythritol. This chain is Putative 4-diphosphocytidyl-2-C-methyl-D-erythritol kinase, found in Streptococcus agalactiae serotype III (strain NEM316).